We begin with the raw amino-acid sequence, 238 residues long: MTPHINAPEGAFADVVLMPGDPLRAKYIAETFLQDVVEVTNVRNMLGFTGTYKGRKISIMGHGMGIPSCSIYAKELITEYGVKKIIRVGSCGTVRMDVKVRDVIIGLGACTDSKVNRIRFKDNDFAAIADFDMAQAAVQAAKAKGKAVRVGNLFSADLFYTPDVEMFDVMEKYGILGVEMEAAGIYGVAAEYGAKALTICTVSDHIRTHEQTTAEERQLTFNDMIEIALDSVLIGDAQ.

Position 4 (His4) interacts with a purine D-ribonucleoside. Phosphate contacts are provided by residues Gly20, Arg24, Arg43, and Arg87 to Ser90. A purine D-ribonucleoside contacts are provided by residues Glu179–Glu181 and Ser203–Asp204. Asp204 functions as the Proton donor in the catalytic mechanism.

It belongs to the PNP/UDP phosphorylase family. As to quaternary structure, homohexamer; trimer of homodimers.

The catalysed reaction is a purine D-ribonucleoside + phosphate = a purine nucleobase + alpha-D-ribose 1-phosphate. It carries out the reaction a purine 2'-deoxy-D-ribonucleoside + phosphate = a purine nucleobase + 2-deoxy-alpha-D-ribose 1-phosphate. Functionally, catalyzes the reversible phosphorolytic breakdown of the N-glycosidic bond in the beta-(deoxy)ribonucleoside molecules, with the formation of the corresponding free purine bases and pentose-1-phosphate. The protein is Purine nucleoside phosphorylase DeoD-type of Haemophilus influenzae (strain PittGG).